A 289-amino-acid chain; its full sequence is WUSCHEL-related homeobox 1 (289 aa).

Positions 1–11 (MDHMQQQQRQQ) are enriched in low complexity. The disordered stretch occupies residues 1-34 (MDHMQQQQRQQVGGGGGEEVAGRGGVPVCRPSGT). Positions 12–25 (VGGGGGEEVAGRGG) are enriched in gly residues. A DNA-binding region (homeobox; WUS-type) is located at residues 31–96 (PSGTRWTPTT…NHKARERQKK (66 aa)).

Belongs to the WUS homeobox family. Interacts with TPR1, TPR2 and TPR3. As to expression, expressed in young leaf primordia. Expressed in branch an floral meristems. Transiently expressed in the shoot apex.

Its subcellular location is the nucleus. Its function is as follows. Transcription repressor required for the formation and development of tiller buds and panicles. Required for tiller formation and female sterility. Required for the early developmental stages of axillary meristem formation. Plays a role in maintaining the axillary premeristem zone and in promoting the formation of the axillary meristem by promoting OSH1 expression. Does not seem to be involved in maintenance of the shoot apical meristem (SAM). In Oryza sativa subsp. japonica (Rice), this protein is WUSCHEL-related homeobox 1.